Here is a 430-residue protein sequence, read N- to C-terminus: Divergent protein kinase domain 2A (430 aa).

A signal peptide spans 1-35; the sequence is MWRLVPLKLGRLSRALKLAALGSLLVLMLLHSPSL.

This sequence belongs to the DIPK family. Expressed in heart, brain, liver, spleen, kidney, lung, thymus, testis, ovary and muscle.

It localises to the golgi apparatus. The protein resides in the cytoplasmic vesicle. The protein localises to the COPI-coated vesicle. Its subcellular location is the secreted. Functionally, may play a role in cardiomyocyte proliferation through paracrine signaling and activation of the PI3-kinase signaling cascade. The sequence is that of Divergent protein kinase domain 2A (Dipk2a) from Mus musculus (Mouse).